The following is a 38-amino-acid chain: Large ribosomal subunit protein bL36 (38 aa).

Belongs to the bacterial ribosomal protein bL36 family.

The polypeptide is Large ribosomal subunit protein bL36 (Azotobacter vinelandii (strain DJ / ATCC BAA-1303)).